The chain runs to 262 residues: Probable carboxylesterase Culp3 (262 aa).

The first 41 residues, 1–41 (MNNRPIRLLTSGRAGLGAGALITAVVLLIALGAVWTPVAFA), serve as a signal peptide directing secretion. The cysteines at positions 44 and 114 are disulfide-linked. Catalysis depends on Ser-125, which acts as the Nucleophile. Residues Cys-188 and Cys-195 are joined by a disulfide bond. Asp-192 is an active-site residue. The active-site Proton donor/acceptor is His-206. Residues 241–262 (LPGSVLQMPGTAAPAPESLHGR) form a disordered region.

It belongs to the cutinase family.

It localises to the secreted. Its function is as follows. Shows weak esterase activity with the p-nitrophenol-linked aliphatic ester pNP-butyrate. Does not exhibit cutinase activity. The chain is Probable carboxylesterase Culp3 (cut3) from Mycobacterium tuberculosis (strain ATCC 25618 / H37Rv).